The primary structure comprises 253 residues: Imidazole glycerol phosphate synthase subunit HisF (253 aa).

Active-site residues include Asp-11 and Asp-130.

The protein belongs to the HisA/HisF family. Heterodimer of HisH and HisF.

The protein localises to the cytoplasm. It catalyses the reaction 5-[(5-phospho-1-deoxy-D-ribulos-1-ylimino)methylamino]-1-(5-phospho-beta-D-ribosyl)imidazole-4-carboxamide + L-glutamine = D-erythro-1-(imidazol-4-yl)glycerol 3-phosphate + 5-amino-1-(5-phospho-beta-D-ribosyl)imidazole-4-carboxamide + L-glutamate + H(+). The protein operates within amino-acid biosynthesis; L-histidine biosynthesis; L-histidine from 5-phospho-alpha-D-ribose 1-diphosphate: step 5/9. IGPS catalyzes the conversion of PRFAR and glutamine to IGP, AICAR and glutamate. The HisF subunit catalyzes the cyclization activity that produces IGP and AICAR from PRFAR using the ammonia provided by the HisH subunit. In Clostridium botulinum (strain Kyoto / Type A2), this protein is Imidazole glycerol phosphate synthase subunit HisF.